We begin with the raw amino-acid sequence, 490 residues long: Hippocampus abundant transcript 1 protein (490 aa).

An N-acetylmethionine modification is found at Met1. The Extracellular portion of the chain corresponds to 1–40 (MTQGKKKKRAANRSIMLAKKIIIKDGGTPQGIGSPSVYHA). An N-linked (GlcNAc...) asparagine glycan is attached at Asn12. Residues 41–61 (VIVIFLEFFAWGLLTAPTLVV) traverse the membrane as a helical segment. Over 62-74 (LHETFPKHTFLMN) the chain is Cytoplasmic. Residues 75 to 95 (GLIQGVKGLLSFLSAPLIGAL) form a helical membrane-spanning segment. Residues 96–103 (SDVWGRKS) are Extracellular-facing. The chain crosses the membrane as a helical span at residues 104-124 (FLLLTVFFTCAPIPLMKISPW). Over 125–126 (WY) the chain is Cytoplasmic. The helical transmembrane segment at 127–147 (FAVISVSGVFAVTFSVVFAYV) threads the bilayer. Residues 148–160 (ADITQEHERSMAY) are Extracellular-facing. The chain crosses the membrane as a helical span at residues 161–181 (GLVSATFAASLVTSPAIGAYL). Over 182–188 (GRVYGDS) the chain is Cytoplasmic. Residues 189-209 (LVVVLATAIALLDICFILVAV) traverse the membrane as a helical segment. Residues 210 to 243 (PESLPEKMRPASWGAPISWEQADPFASLKKVGQD) are Extracellular-facing. Residues 244–264 (SIVLLICITVFLSYLPEAGQY) form a helical membrane-spanning segment. Over 265–284 (SSFFLYLRQIMKFSPESVAA) the chain is Cytoplasmic. The helical transmembrane segment at 285-305 (FIAVLGILSIIAQTIVLSLLM) threads the bilayer. At 306–313 (RSIGNKNT) the chain is on the extracellular side. The chain crosses the membrane as a helical span at residues 314-334 (ILLGLGFQILQLAWYGFGSEP). Residues 335–337 (WMM) are Cytoplasmic-facing. A helical membrane pass occupies residues 338 to 358 (WAAGAVAAMSSITFPAVSALV). The Extracellular portion of the chain corresponds to 359–379 (SRTADADQQGVVQGMITGIRG). A helical transmembrane segment spans residues 380–400 (LCNGLGPALYGFIFYIFHVEL). At 401–427 (KELPITGTDLGTNTSPQHHFEQNSIIP) the chain is on the cytoplasmic side. Residues 428–448 (GPPFLFGACSVLLALLVALFI) traverse the membrane as a helical segment. The Extracellular portion of the chain corresponds to 449-490 (PEHTNLSLRSSSWRKHCGSHSHPHNTQAPGEAKEPLLQDTNV). N-linked (GlcNAc...) asparagine glycosylation is present at Asn453. Positions 465 to 490 (CGSHSHPHNTQAPGEAKEPLLQDTNV) are disordered.

Belongs to the major facilitator superfamily.

The protein localises to the membrane. The polypeptide is Hippocampus abundant transcript 1 protein (Homo sapiens (Human)).